Reading from the N-terminus, the 166-residue chain is MCNKLFAGRRGYFLGFVASFGLVGLALFLQQKYNLEPCPLCISQRIAFMALGILFLLAALHNPGRVGRKVYGLLHVIAAATGIGIAARHIWIQANPDKVMAECGAGFDYIMETFPLKKALDLIFKGTGECSAIDWTLFGLTIPQLSLIAFVGLGLFAVLLAFHKKA.

Topologically, residues 1–11 are cytoplasmic; that stretch reads MCNKLFAGRRG. The chain crosses the membrane as a helical span at residues 12 to 28; sequence YFLGFVASFGLVGLALF. Topologically, residues 29 to 46 are periplasmic; the sequence is LQQKYNLEPCPLCISQRI. Cysteine 38 and cysteine 41 are joined by a disulfide. Residues 47–63 traverse the membrane as a helical segment; it reads AFMALGILFLLAALHNP. Residues 64–69 are Cytoplasmic-facing; the sequence is GRVGRK. A helical membrane pass occupies residues 70–87; the sequence is VYGLLHVIAAATGIGIAA. Over 88 to 144 the chain is Periplasmic; it reads RHIWIQANPDKVMAECGAGFDYIMETFPLKKALDLIFKGTGECSAIDWTLFGLTIPQ. Cysteine 103 and cysteine 130 are joined by a disulfide. Residues 145–163 form a helical membrane-spanning segment; it reads LSLIAFVGLGLFAVLLAFH. The Cytoplasmic segment spans residues 164–166; the sequence is KKA.

It belongs to the DsbB family.

The protein localises to the cell inner membrane. In terms of biological role, required for disulfide bond formation in some periplasmic proteins. Acts by oxidizing the DsbA protein. This Methylobacillus flagellatus (strain ATCC 51484 / DSM 6875 / VKM B-1610 / KT) protein is Disulfide bond formation protein B.